A 338-amino-acid polypeptide reads, in one-letter code: Starch-binding domain-containing protein 1 (338 aa).

The Extracellular portion of the chain corresponds to 1-6 (MGAVWS). The helical transmembrane segment at 7–23 (ALLVGGGLAGALILWLL) threads the bilayer. The Cytoplasmic segment spans residues 24–338 (RGDSGAPGKD…KVVHGWWGIH (315 aa)). 2 disordered regions span residues 30–73 (PGKD…RELV) and 120–148 (KIPDTHSRADSEAARNQSPGSHGGEWRLP). Residues 36-52 (AEPPQKGAPPGEAAAPG) show a composition bias toward low complexity. A compositionally biased stretch (gly residues) spans 53 to 62 (DGPGGGGSGG). A Phosphoserine modification is found at S68. A compositionally biased stretch (basic and acidic residues) spans 122–132 (PDTHSRADSEA). Phosphoserine is present on residues S140, S167, and S179. Residues 185-191 (HEDWEVV) carry the LIR motif. Phosphoserine occurs at positions 195, 196, 205, 209, 212, 220, and 223. In terms of domain architecture, CBM20 spans 238 to 337 (SLKPQQVSIQ…DKVVHGWWGI (100 aa)).

As to quaternary structure, interacts with the ATG8 family proteins GABARAP and GABARAPL1. Interacts with several glycogen-associated proteins, such as GYS2 (liver glycogen synthase), GDE (glycogen debranching enzyme), GBE1 (glycogen branching enzyme 1) and EPM2A (Laforin). Post-translationally, ubiquitinated, which leads to proteasomal degradation. Expressed at high level in glycogen-accumulating organs such as muscle and liver. Trace signals are also found in brain, kidney, and pancreas.

The protein resides in the preautophagosomal structure membrane. Its subcellular location is the endoplasmic reticulum membrane. It is found in the cell membrane. The protein localises to the sarcolemma. It localises to the T-tubule. Its function is as follows. Acts as a cargo receptor for glycogen. Delivers its cargo to an autophagic pathway called glycophagy, resulting in the transport of glycogen to lysosomes. This is Starch-binding domain-containing protein 1 from Mus musculus (Mouse).